The sequence spans 187 residues: MAIGMSELKKGLKIELGGVPYRIVEYQHVKPGKGAAFVRAKIKSFLDGKVIEKTFHAGDKCEEPNLVEKTMQYLYHDGDTYQFMDIESYEQIALNDSQVGEASKWMLDGMQVQVLLHNDKAISVDVPQVVALKIVETAPNFKGDTSSASKKPATLETGAVVQVPFHVLEGEVIKVNTETEEYLEKVK.

Belongs to the elongation factor P family.

The protein resides in the cytoplasm. It functions in the pathway protein biosynthesis; polypeptide chain elongation. In terms of biological role, involved in peptide bond synthesis. Stimulates efficient translation and peptide-bond synthesis on native or reconstituted 70S ribosomes in vitro. Probably functions indirectly by altering the affinity of the ribosome for aminoacyl-tRNA, thus increasing their reactivity as acceptors for peptidyl transferase. In Helicobacter pylori (strain P12), this protein is Elongation factor P.